The chain runs to 409 residues: Serine hydroxymethyltransferase (409 aa).

(6S)-5,6,7,8-tetrahydrofolate contacts are provided by residues Leu116 and 120–122 (GHL). An N6-(pyridoxal phosphate)lysine modification is found at Lys225.

It belongs to the SHMT family. As to quaternary structure, homodimer. It depends on pyridoxal 5'-phosphate as a cofactor.

It localises to the cytoplasm. The catalysed reaction is (6R)-5,10-methylene-5,6,7,8-tetrahydrofolate + glycine + H2O = (6S)-5,6,7,8-tetrahydrofolate + L-serine. It functions in the pathway one-carbon metabolism; tetrahydrofolate interconversion. The protein operates within amino-acid biosynthesis; glycine biosynthesis; glycine from L-serine: step 1/1. In terms of biological role, catalyzes the reversible interconversion of serine and glycine with tetrahydrofolate (THF) serving as the one-carbon carrier. This reaction serves as the major source of one-carbon groups required for the biosynthesis of purines, thymidylate, methionine, and other important biomolecules. Also exhibits THF-independent aldolase activity toward beta-hydroxyamino acids, producing glycine and aldehydes, via a retro-aldol mechanism. The protein is Serine hydroxymethyltransferase of Acholeplasma laidlawii (strain PG-8A).